The primary structure comprises 637 residues: MAAMAVGGAGGSRVSSGRDLNCVPEIADTLGAVAKQGFDFLCMPVFHPRFKREFTQEPAKSRPGPQTRSDLLLSGRDWNTLIVGKLSPWIRPDSKVEKIRRNSEAAMLQELNFGAYLGLPAFLLPLNQEDNTNLARVLTNHIHTGHHSSMFWMRVPLVAPEDLRDDIIENAPTSHTEEYSGEEKTWMWWHNFRTLCDYSKRIAVALEIGADLPSNHVIDRWLGEPIKAAILPTSIFLTNKKGFPVLSKMHQRLIFRLLKLEVQFIITGTNHHSEKEFCSYLQYLEYLSQNRPPPNAYELFAKGYEDYLQSPLQPLMDNLESQTYEVFEKDPIKYSQYQQAIYKCLLDRVPEEEKDTNIQVLMVLGAGRGPLVNASLRAAKQADRRIKLYAVEKNPNAVVTLENWQFEEWGSQVTVVSSDMREWVAPEKADIIVSELLGSFADNELSPESLDGAQHFLKDDGVSIPGEYTSFLAPISSSKLYNEVRACREKDRDPEAQFEMPYVVRLHNFHQLSAPQPCFTFSHPNRDPMIDNNRYCTLEFPVEVNTVLHGFAGYFETVLYQDITLSIRPETHSPGMFSWFPILFPIKQPITVREGQTICVRFWRCSNSKKVWYEWAVTAPVCSAIHNPTGRSYTIGL.

A2 carries the N-acetylalanine modification. The TIM barrel stretch occupies residues 13–292 (RVSSGRDLNC…YLEYLSQNRP (280 aa)). The 308-residue stretch at 308–615 (LQSPLQPLMD…SNSKKVWYEW (308 aa)) folds into the SAM-dependent MTase PRMT-type domain. Residue Y324 coordinates S-adenosyl-L-methionine. F327 serves as a coordination point for a protein. S-adenosyl-L-methionine is bound by residues 333–334 (KY), E392, and 419–420 (DM). A protein contacts are provided by E435 and E444. Active-site proton donor/acceptor residues include E435 and E444. Positions 465-637 (PGEYTSFLAP…PTGRSYTIGL (173 aa)) are beta barrel. The segment at 488–494 (REKDRDP) is dimerization.

Belongs to the class I-like SAM-binding methyltransferase superfamily. Protein arginine N-methyltransferase family. In terms of assembly, forms, at least, homodimers and homotetramers. Component of the methylosome complex, composed of PRMT5, WDR77 and CLNS1A. Found in a complex composed of PRMT5, WDR77 and RIOK1. RIOK1 and CLNS1A associate with PRMT5 in a mutually exclusive fashion, which allows the recruitment of distinct methylation substrates, such as nucleolin/NCL and Sm proteins, respectively. Interacts with PRDM1. Identified in a complex composed of methylosome and PRMT1 and ERH. Interacts with EGFR; methylates EGFR and stimulates EGFR-mediated ERK activation. Interacts with HOXA9. Interacts with SRGAP2. Found in a complex with COPRS, RUNX1 and CBFB. Interacts with CHTOP; the interaction symmetrically methylates CHTOP, but seems to require the presence of PRMT1. Interacts with EPB41L3; this modulates methylation of target proteins. Component of a high molecular weight E2F-pocket protein complex, CERC (cyclin E1 repressor complex). Associates with SWI/SNF remodeling complexes containing SMARCA2 and SMARCA4. Interacts with JAK2, SSTR1, SUPT5H, BRAF and with active RAF1. Interacts with LSM11, PRMT7 and SNRPD3. Interacts with COPRS; promoting its recruitment on histone H4. Interacts with CLNS1A/pICln. Identified in a complex with CLNS1A/pICln and Sm proteins. Interacts with RPS10. Interacts with WDR77. Interacts with IWS1. Interacts with CRY1. Interacts with POLR2A. Interacts with SMN1/SMN2. Interacts with LYAR; this interaction is direct. Interacts with TTC5/STRAP; this interaction is DNA damage-dependent and promotes PRMT5 interaction with p53/TP53. Interacts with p53/TP53 in response to DNA damage; the interaction is TTC5/STRAP dependent. Interacts with FAM47E; the interaction is direct, promotes PRMT5 localization to chromatin, and does not disrupt its association with WDR77 or STUB1. Interacts with TDRD6. Interacts with STUB1. Interacts with MBD2. Does not interact with MBD3.

Its subcellular location is the cytoplasm. It is found in the nucleus. The protein localises to the golgi apparatus. It catalyses the reaction L-arginyl-[protein] + 2 S-adenosyl-L-methionine = N(omega),N(omega)'-dimethyl-L-arginyl-[protein] + 2 S-adenosyl-L-homocysteine + 2 H(+). With respect to regulation, activity is increased by EGF, HGF, FGF1 or FGF2 treatments, and slightly decreased by NGF treatment. In terms of biological role, arginine methyltransferase that can both catalyze the formation of omega-N monomethylarginine (MMA) and symmetrical dimethylarginine (sDMA), with a preference for the formation of MMA. Specifically mediates the symmetrical dimethylation of arginine residues in the small nuclear ribonucleoproteins Sm D1 (SNRPD1) and Sm D3 (SNRPD3); such methylation being required for the assembly and biogenesis of snRNP core particles. Methylates SUPT5H and may regulate its transcriptional elongation properties. May methylate the N-terminal region of MBD2. Mono- and dimethylates arginine residues of myelin basic protein (MBP) in vitro. May play a role in cytokine-activated transduction pathways. Negatively regulates cyclin E1 promoter activity and cellular proliferation. Methylates histone H2A and H4 'Arg-3' during germ cell development. Methylates histone H3 'Arg-8', which may repress transcription. Methylates the Piwi proteins (PIWIL1, PIWIL2 and PIWIL4), methylation of Piwi proteins being required for the interaction with Tudor domain-containing proteins and subsequent localization to the meiotic nuage. Methylates RPS10. Attenuates EGF signaling through the MAPK1/MAPK3 pathway acting at 2 levels. First, monomethylates EGFR; this enhances EGFR 'Tyr-1197' phosphorylation and PTPN6 recruitment, eventually leading to reduced SOS1 phosphorylation. Second, methylates RAF1 and probably BRAF, hence destabilizing these 2 signaling proteins and reducing their catalytic activity. Required for induction of E-selectin and VCAM-1, on the endothelial cells surface at sites of inflammation. Methylates HOXA9. Methylates and regulates SRGAP2 which is involved in cell migration and differentiation. Acts as a transcriptional corepressor in CRY1-mediated repression of the core circadian component PER1 by regulating the H4R3 dimethylation at the PER1 promoter. Methylates GM130/GOLGA2, regulating Golgi ribbon formation. Methylates H4R3 in genes involved in glioblastomagenesis in a CHTOP- and/or TET1-dependent manner. Symmetrically methylates POLR2A, a modification that allows the recruitment to POLR2A of proteins including SMN1/SMN2 and SETX. This is required for resolving RNA-DNA hybrids created by RNA polymerase II, that form R-loop in transcription terminal regions, an important step in proper transcription termination. Along with LYAR, binds the promoter of gamma-globin HBG1/HBG2 and represses its expression. Symmetrically methylates NCL. Methylates p53/TP53; methylation might possibly affect p53/TP53 target gene specificity. Involved in spliceosome maturation and mRNA splicing in prophase I spermatocytes through the catalysis of the symmetrical arginine dimethylation of SNRPB (small nuclear ribonucleoprotein-associated protein) and the interaction with tudor domain-containing protein TDRD6. The polypeptide is Protein arginine N-methyltransferase 5 (PRMT5) (Bos taurus (Bovine)).